A 451-amino-acid polypeptide reads, in one-letter code: Phosphoglucosamine mutase (451 aa).

Residue Ser-102 is the Phosphoserine intermediate of the active site. Ser-102, Asp-242, Asp-244, and Asp-246 together coordinate Mg(2+). Ser-102 bears the Phosphoserine mark.

This sequence belongs to the phosphohexose mutase family. It depends on Mg(2+) as a cofactor. Post-translationally, activated by phosphorylation.

It carries out the reaction alpha-D-glucosamine 1-phosphate = D-glucosamine 6-phosphate. Functionally, catalyzes the conversion of glucosamine-6-phosphate to glucosamine-1-phosphate. This chain is Phosphoglucosamine mutase, found in Staphylococcus epidermidis (strain ATCC 35984 / DSM 28319 / BCRC 17069 / CCUG 31568 / BM 3577 / RP62A).